The chain runs to 431 residues: GTPase Obg (431 aa).

In terms of domain architecture, Obg spans 1–158 (MFVDQVKVDV…LTIRMELKVL (158 aa)). Residues 159 to 335 (ADVGLVGFPS…LLAKTADLLD (177 aa)) enclose the OBG-type G domain. Residues 165 to 172 (GFPSVGKS), 190 to 194 (FTTLV), 212 to 215 (DLPG), 282 to 285 (TKMD), and 316 to 318 (SSI) each bind GTP. Ser-172 and Thr-192 together coordinate Mg(2+). An OCT domain is found at 353–431 (YTTEADADFS…ILDYSFQFMD (79 aa)).

The protein belongs to the TRAFAC class OBG-HflX-like GTPase superfamily. OBG GTPase family. Monomer. The cofactor is Mg(2+).

It localises to the cytoplasm. Functionally, an essential GTPase which binds GTP, GDP and possibly (p)ppGpp with moderate affinity, with high nucleotide exchange rates and a fairly low GTP hydrolysis rate. Plays a role in control of the cell cycle, stress response, ribosome biogenesis and in those bacteria that undergo differentiation, in morphogenesis control. This chain is GTPase Obg, found in Lactiplantibacillus plantarum (strain ATCC BAA-793 / NCIMB 8826 / WCFS1) (Lactobacillus plantarum).